The chain runs to 132 residues: Precursor of CEP10 (132 aa).

The signal sequence occupies residues 1–19 (MKLFIIIVVTSLTISKVFD). Positions 20-66 (KTLVTIEARNLRKMDRHEHFNANEDFVEAKMLKKIDNKNNLNNRCIN) are excised as a propeptide. Residues P70 and P73 each carry the hydroxyproline modification. The propeptide occupies 82–91 (PKVINNKFTK). P95, P98, and P102 each carry hydroxyproline. The propeptide occupies 107–116 (LRVVNNKFTN). Hydroxyproline occurs at positions 120, 123, and 127. Residue P132 is a propeptide.

It belongs to the C-terminally encoded plant signaling peptide (CEP) family. In terms of assembly, interacts with CEP receptors (e.g. CEPR1 and CEPR2). The mature small signaling peptide is generated by proteolytic processing of the longer precursor.

The protein localises to the secreted. It is found in the extracellular space. The protein resides in the apoplast. Its function is as follows. Extracellular signaling peptide that may regulate primary root growth rate and systemic nitrogen (N)-demand signaling. The polypeptide is Precursor of CEP10 (Arabidopsis thaliana (Mouse-ear cress)).